We begin with the raw amino-acid sequence, 470 residues long: Calcitonin gene-related peptide type 1 receptor (470 aa).

The signal sequence occupies residues 1–23; the sequence is MTASCWTICLFLLGSVTEFIVLA. At 24-147 the chain is on the extracellular side; the sequence is SPEVNESQQQ…HTTEGRRTAM (124 aa). N-linked (GlcNAc...) asparagine glycans are attached at residues asparagine 28, asparagine 74, asparagine 126, and asparagine 131. 3 disulfide bridges follow: cysteine 56/cysteine 82, cysteine 73/cysteine 113, and cysteine 96/cysteine 135. Residues 148–172 form a helical membrane-spanning segment; sequence NLFYLALIGHGLSLTSLFISLGIFF. Over 173 to 183 the chain is Cytoplasmic; the sequence is HFKSLSCQRIT. The helical transmembrane segment at 184-206 threads the bilayer; the sequence is LHKNLFFSFVLNSIITIIWLTAV. At 207–217 the chain is on the extracellular side; that stretch reads ANNQELVQQNP. The helical transmembrane segment at 218 to 246 threads the bilayer; that stretch reads ISCKISQFIHLYIFGCNYFWMLCEGIYLH. The Cytoplasmic portion of the chain corresponds to 247–260; sequence TLIVVAVFAEKQHL. Residues 261-281 traverse the membrane as a helical segment; it reads MWYYLLGWGFPLIPATIHAVA. Over 282 to 297 the chain is Extracellular; sequence RSYYYNDNCWISSNTS. Asparagine 295 carries N-linked (GlcNAc...) asparagine glycosylation. Residues 298-322 form a helical membrane-spanning segment; that stretch reads LLYIIHGPICAAMLVNLFFLLNIVR. At 323–337 the chain is on the cytoplasmic side; that stretch reads VLITKLKVTHQAKSS. The chain crosses the membrane as a helical span at residues 338 to 359; that stretch reads LYMKAVRATLILVPLLGIQYVL. Residues 360 to 374 lie on the Extracellular side of the membrane; that stretch reads LPYKPSGRVSAEIYD. Residues 375–395 traverse the membrane as a helical segment; it reads YIMHILMHYQGLLVATIFCFF. At 396–470 the chain is on the cytoplasmic side; it reads NGEVQAVLRR…AIIKPENPFA (75 aa).

This sequence belongs to the G-protein coupled receptor 2 family.

It is found in the cell membrane. Its function is as follows. May function as G protein-coupled receptor for calcitonin-gene-related peptides and adrenomedullin. Specificity may be modulated by accessory proteins. May activate cAMP-dependent pathway. The protein is Calcitonin gene-related peptide type 1 receptor (calcrla) of Danio rerio (Zebrafish).